The chain runs to 88 residues: UPF0297 protein SSA_2241 (88 aa).

This sequence belongs to the UPF0297 family.

The sequence is that of UPF0297 protein SSA_2241 from Streptococcus sanguinis (strain SK36).